The sequence spans 315 residues: Thymidylate synthase (315 aa).

DUMP is bound by residues R29 and 156–157 (RR). C176 acts as the Nucleophile in catalysis. DUMP is bound by residues 213–216 (RSCD), N224, and 254–256 (HVY). (6R)-5,10-methylene-5,6,7,8-tetrahydrofolate is bound at residue D216.

This sequence belongs to the thymidylate synthase family. Homodimer.

It carries out the reaction dUMP + (6R)-5,10-methylene-5,6,7,8-tetrahydrofolate = 7,8-dihydrofolate + dTMP. It participates in pyrimidine metabolism; dTTP biosynthesis. The chain is Thymidylate synthase (TMP1) from Candida albicans (strain SC5314 / ATCC MYA-2876) (Yeast).